Here is a 956-residue protein sequence, read N- to C-terminus: Probable hypoxanthine oxidase XdhD (956 aa).

Residues Q414, F445, and A727 each coordinate Mo-molybdopterin.

The protein belongs to the xanthine dehydrogenase family. [2Fe-2S] cluster is required as a cofactor. Mo-molybdopterin serves as cofactor.

Functionally, probably has no xanthine dehydrogenase activity; however deletion results in increased adenine sensitivity, suggesting that this protein contributes to the conversion of adenine to guanine nucleotides during purine salvage. The sequence is that of Probable hypoxanthine oxidase XdhD (xdhD) from Escherichia coli (strain K12).